Consider the following 103-residue polypeptide: MLLSKITFFERFEQDILSGAKTITLRDETESHVVAGQILPVSTFETDRWFCDIQIIDVMPVKLTELTDVHAEQENMTLPQLRSVIAEIYPGLEQLYMISFVVL.

The ASCH domain maps to 7–93 (TFFERFEQDI…VIAEIYPGLE (87 aa)). Lys-21 functions as the Proton acceptor in the catalytic mechanism. Catalysis depends on Thr-24, which acts as the Nucleophile. The active-site Proton donor is Glu-74.

The protein belongs to the N(4)-acetylcytidine amidohydrolase family.

It catalyses the reaction N(4)-acetylcytidine + H2O = cytidine + acetate + H(+). It carries out the reaction N(4)-acetyl-2'-deoxycytidine + H2O = 2'-deoxycytidine + acetate + H(+). The catalysed reaction is N(4)-acetylcytosine + H2O = cytosine + acetate + H(+). Its function is as follows. Catalyzes the hydrolysis of N(4)-acetylcytidine (ac4C). The chain is N(4)-acetylcytidine amidohydrolase from Shewanella putrefaciens (strain CN-32 / ATCC BAA-453).